We begin with the raw amino-acid sequence, 257 residues long: Flagellar brake protein YcgR 1 (257 aa).

A compositionally biased stretch (polar residues) spans 1–18 (MDTTQSNGQTDTQGQLHA). Positions 1–30 (MDTTQSNGQTDTQGQLHAQTAEGGNDFGRR) are disordered. The PilZ domain occupies 133 to 246 (QRREYFRVDA…AENTLQRLIT (114 aa)).

The protein belongs to the YcgR family. In terms of assembly, monomer. Interacts with the flagellar basal bodies.

It localises to the bacterial flagellum basal body. Acts as a flagellar brake, regulating swimming and swarming in a bis-(3'-5') cyclic diguanylic acid (c-di-GMP)-dependent manner. Binds 1 c-di-GMP dimer per subunit. Increasing levels of c-di-GMP lead to decreased motility. This is Flagellar brake protein YcgR 1 from Paraburkholderia phytofirmans (strain DSM 17436 / LMG 22146 / PsJN) (Burkholderia phytofirmans).